A 937-amino-acid chain; its full sequence is Protein translocase subunit SecA (937 aa).

ATP-binding positions include Gln-87, 105 to 109 (GEGKT), and Asp-494. Positions 881–937 (RGLNYIGPDEGGRASVHSDAEEYGGGTPAAAGTRRERREAARAEGKGKRGPKSRRKH) are disordered. Composition is skewed to basic and acidic residues over residues 890 to 900 (EGGRASVHSDA) and 913 to 927 (TRRE…EGKG). Over residues 928–937 (KRGPKSRRKH) the composition is skewed to basic residues.

It belongs to the SecA family. In terms of assembly, monomer and homodimer. Part of the essential Sec protein translocation apparatus which comprises SecA, SecYEG and auxiliary proteins SecDF. Other proteins may also be involved.

The protein resides in the cell membrane. It is found in the cytoplasm. It carries out the reaction ATP + H2O + cellular proteinSide 1 = ADP + phosphate + cellular proteinSide 2.. Part of the Sec protein translocase complex. Interacts with the SecYEG preprotein conducting channel. Has a central role in coupling the hydrolysis of ATP to the transfer of proteins into and across the cell membrane, serving as an ATP-driven molecular motor driving the stepwise translocation of polypeptide chains across the membrane. This Nocardia farcinica (strain IFM 10152) protein is Protein translocase subunit SecA.